The sequence spans 1628 residues: Centrosomal protein of 170 kDa protein B (1628 aa).

Residues 23–73 enclose the FHA domain; that stretch reads IFVGREDCELMLQSRSVDKQHAVINYDSDKDEHRVKDLGSLNGTFVNDVRI. Disordered stretches follow at residues 136 to 201, 329 to 369, 415 to 504, 566 to 586, 637 to 659, 719 to 739, 758 to 842, 1005 to 1084, 1100 to 1341, 1379 to 1405, 1443 to 1463, and 1560 to 1628; these read EHGA…DMTQ, LIRR…SEDP, PRKK…GKNY, SDVRTGKVKNEEEDNLSDAGT, LASEPSVPHKPIMSSTPPVKLSN, EHQGEADPTVPSRTRRLLPQL, ESQR…KKST, VSLV…LDFT, TVSS…EDEQ, AGDGDSQSSSGTGQSTSISSVPNTPAS, GSTGLEDFDQNMNDSREDPSK, and HLDV…TYIV. Composition is skewed to basic and acidic residues over residues 147-156 and 180-201; these read KQDKADKKAT and KLDKEGRRQDEHYSERPNDMTQ. Polar residues predominate over residues 421–434; the sequence is QSFTHNANSPQNDT. A compositionally biased stretch (basic and acidic residues) spans 436–453; the sequence is PVLKAKAEKRKGTLHVEK. A compositionally biased stretch (polar residues) spans 454-479; the sequence is VSTNGMGSTAPASKSLSSPSFPQRSN. Basic and acidic residues predominate over residues 481–490; it reads FRREKTEDRI. Basic and acidic residues-rich tracts occupy residues 758–773 and 817–828; these read ESQRKSLEEPEKRISE and WKGEESHSREPS. Residues 1005–1023 show a composition bias toward polar residues; sequence VSLVSDKNVPSHSQKNRIV. Positions 1045-1056 are enriched in basic and acidic residues; it reads ARERLSEKRRTV. A compositionally biased stretch (polar residues) spans 1129 to 1150; that stretch reads RSSNAQKVQQALTRSNSLSTPR. Residues 1176-1193 are compositionally biased toward low complexity; it reads SNISPGTSSANSSSAKSS. Over residues 1216-1227 the composition is skewed to polar residues; that stretch reads NVPSDSETTSSV. Composition is skewed to low complexity over residues 1261-1280, 1312-1328, and 1381-1398; these read TQKQTPRPRSSSVKYSSSST, ASTATQTSRSSSVSRRQ, and DGDSQSSSGTGQSTSISS. A compositionally biased stretch (polar residues) spans 1564–1596; it reads PSSNKKTSSTILTSNPLSRTTNNSAARTESQTP. Residues 1606-1618 are compositionally biased toward low complexity; the sequence is SSSSSSRSPGSSF.

This sequence belongs to the CEP170 family.

The protein localises to the cytoplasm. It is found in the cytoskeleton. In terms of biological role, plays a role in microtubule organization. This chain is Centrosomal protein of 170 kDa protein B (cep170b), found in Xenopus tropicalis (Western clawed frog).